A 380-amino-acid polypeptide reads, in one-letter code: Queuine tRNA-ribosyltransferase (380 aa).

The Proton acceptor role is filled by Asp-95. Substrate contacts are provided by residues 95 to 99 (DSGGF), Asp-149, Gln-192, and Gly-219. The RNA binding stretch occupies residues 250–256 (GVGSPDS). Asp-269 functions as the Nucleophile in the catalytic mechanism. The interval 274-278 (TRIGR) is RNA binding; important for wobble base 34 recognition. Residues Cys-307, Cys-309, Cys-312, and His-338 each contribute to the Zn(2+) site.

The protein belongs to the queuine tRNA-ribosyltransferase family. Homodimer. Within each dimer, one monomer is responsible for RNA recognition and catalysis, while the other monomer binds to the replacement base PreQ1. Requires Zn(2+) as cofactor.

It carries out the reaction 7-aminomethyl-7-carbaguanine + guanosine(34) in tRNA = 7-aminomethyl-7-carbaguanosine(34) in tRNA + guanine. The protein operates within tRNA modification; tRNA-queuosine biosynthesis. Functionally, catalyzes the base-exchange of a guanine (G) residue with the queuine precursor 7-aminomethyl-7-deazaguanine (PreQ1) at position 34 (anticodon wobble position) in tRNAs with GU(N) anticodons (tRNA-Asp, -Asn, -His and -Tyr). Catalysis occurs through a double-displacement mechanism. The nucleophile active site attacks the C1' of nucleotide 34 to detach the guanine base from the RNA, forming a covalent enzyme-RNA intermediate. The proton acceptor active site deprotonates the incoming PreQ1, allowing a nucleophilic attack on the C1' of the ribose to form the product. After dissociation, two additional enzymatic reactions on the tRNA convert PreQ1 to queuine (Q), resulting in the hypermodified nucleoside queuosine (7-(((4,5-cis-dihydroxy-2-cyclopenten-1-yl)amino)methyl)-7-deazaguanosine). The sequence is that of Queuine tRNA-ribosyltransferase from Geobacillus thermodenitrificans (strain NG80-2).